The chain runs to 274 residues: Type III pantothenate kinase (274 aa).

An ATP-binding site is contributed by 6-13 (DVRNTHTV). A substrate-binding site is contributed by 109-112 (GADR). The active-site Proton acceptor is aspartate 111. Aspartate 131 contacts K(+). Serine 134 serves as a coordination point for ATP. Threonine 186 is a substrate binding site.

The protein belongs to the type III pantothenate kinase family. As to quaternary structure, homodimer. NH4(+) serves as cofactor. The cofactor is K(+).

The protein localises to the cytoplasm. The enzyme catalyses (R)-pantothenate + ATP = (R)-4'-phosphopantothenate + ADP + H(+). The protein operates within cofactor biosynthesis; coenzyme A biosynthesis; CoA from (R)-pantothenate: step 1/5. Catalyzes the phosphorylation of pantothenate (Pan), the first step in CoA biosynthesis. In Mycobacterium leprae (strain Br4923), this protein is Type III pantothenate kinase.